We begin with the raw amino-acid sequence, 292 residues long: uncharacterized protein (292 aa).

Residues 62–81 form a disordered region; the sequence is ESSSDSDMGFHESQQNQKSN.

This is an uncharacterized protein from Homo sapiens (Human).